The primary structure comprises 99 residues: Large ribosomal subunit protein bL27 (99 aa).

A disordered region spans residues 13 to 65; the sequence is AHHKGGGSTTNGRNSAGRRLGAKRADGQEVHAGSIIYRQRGTKIHPGKNVGRG.

It belongs to the bacterial ribosomal protein bL27 family.

The sequence is that of Large ribosomal subunit protein bL27 from Lactobacillus delbrueckii subsp. bulgaricus (strain ATCC BAA-365 / Lb-18).